Here is a 342-residue protein sequence, read N- to C-terminus: Farnesyl pyrophosphate synthase 1 (342 aa).

Residues K47, R50, and Q86 each contribute to the isopentenyl diphosphate site. Positions 93 and 97 each coordinate Mg(2+). Residue R102 participates in dimethylallyl diphosphate binding. R103 lines the isopentenyl diphosphate pocket. Dimethylallyl diphosphate is bound by residues K190, T191, Q229, K246, and K255.

It belongs to the FPP/GGPP synthase family. Mg(2+) serves as cofactor.

The protein resides in the cytoplasm. It catalyses the reaction isopentenyl diphosphate + dimethylallyl diphosphate = (2E)-geranyl diphosphate + diphosphate. The enzyme catalyses isopentenyl diphosphate + (2E)-geranyl diphosphate = (2E,6E)-farnesyl diphosphate + diphosphate. The protein operates within isoprenoid biosynthesis; farnesyl diphosphate biosynthesis; farnesyl diphosphate from geranyl diphosphate and isopentenyl diphosphate: step 1/1. It participates in isoprenoid biosynthesis; geranyl diphosphate biosynthesis; geranyl diphosphate from dimethylallyl diphosphate and isopentenyl diphosphate: step 1/1. Catalyzes the sequential condensation of isopentenyl pyrophosphate with the allylic pyrophosphates, dimethylallyl pyrophosphate, and then with the resultant geranylpyrophosphate to the ultimate product farnesyl pyrophosphate. The protein is Farnesyl pyrophosphate synthase 1 (FPS1) of Lupinus albus (White lupine).